A 247-amino-acid polypeptide reads, in one-letter code: NADH dehydrogenase [ubiquinone] flavoprotein 2, mitochondrial (247 aa).

Residues 1-40 (MFRSLLKRTTFLNQLNKSNGFNRNYFKQSTLTRSDALSRH) constitute a mitochondrion transit peptide. Residues C135, C140, C176, and C180 each contribute to the [2Fe-2S] cluster site. Positions 211–247 (NKPTKIGPQTHRKAAEGPQGKTTLLEPPVGPTCRDDL) are disordered.

It belongs to the complex I 24 kDa subunit family. As to quaternary structure, complex I is composed of 45 different subunits. This is a component of the flavoprotein-sulfur (FP) fragment of the enzyme. Requires [2Fe-2S] cluster as cofactor.

It localises to the mitochondrion inner membrane. It catalyses the reaction a ubiquinone + NADH + 5 H(+)(in) = a ubiquinol + NAD(+) + 4 H(+)(out). Core subunit of the mitochondrial membrane respiratory chain NADH dehydrogenase (Complex I) that is believed to belong to the minimal assembly required for catalysis. Complex I functions in the transfer of electrons from NADH to the respiratory chain. The immediate electron acceptor for the enzyme is believed to be ubiquinone. This Dictyostelium discoideum (Social amoeba) protein is NADH dehydrogenase [ubiquinone] flavoprotein 2, mitochondrial (ndufv2).